Consider the following 373-residue polypeptide: MFSKVLPFVGAVAALPHSVRQEPGSGIGYPYDNNTLPYVAPGPTDSRAPCPALNALANHGYIPHDGRAISRETLQNAFLNHMGIANSVIELALTNAFVVCEYVTGSDCGDSLVNLTLLAEPHAFEHDHSFSRKDYKQGVANSNDFIDNRNFDAETFQTSLDVVAGKTHFDYADMNEIRLQRESLSNELDFPGWFTESKPIQNVESGFIFALVSDFNLPDNDENPLVRIDWWKYWFTNESFPYHLGWHPPSPAREIEFVTSASSAVLAASVTSTPSSLPSGAIGPGAEAVPLSFASTMTPFLLATNAPYYAQDPTLGPNDKREAAPAATTSMAVFKNPYLEAIGTQDIKNQQAYVSSKAAAMASAMAANKARNL.

Residues 1–20 form the signal peptide; sequence MFSKVLPFVGAVAALPHSVR. At Gln-21 the chain carries Pyrrolidone carboxylic acid. A glycan (N-linked (GlcNAc...) asparagine) is linked at Asn-33. Cys-50 contacts heme. Residues Cys-100 and Cys-108 are joined by a disulfide bond. Asn-114 carries an N-linked (GlcNAc...) asparagine glycan. Positions 125, 126, and 129 each coordinate Mn(2+). Glu-204 is a catalytic residue. Asn-237 is a glycosylation site (N-linked (GlcNAc...) asparagine). Residue Thr-259 is glycosylated (O-linked (Man) threonine). O-linked (Man) serine glycans are attached at residues Ser-260, Ser-262, Ser-263, and Ser-269. Thr-271 is a glycosylation site (O-linked (Man) threonine). Residue Ser-272 is glycosylated (O-linked (Man) serine). Thr-273 carries O-linked (Man) threonine glycosylation. O-linked (Man...) threonine glycans are attached at residues Thr-296, Thr-304, and Thr-314. Residues 322 to 373 constitute a propeptide that is removed on maturation; it reads EAAPAATTSMAVFKNPYLEAIGTQDIKNQQAYVSSKAAAMASAMAANKARNL.

It belongs to the chloroperoxidase family. The cofactor is heme b. It depends on Mn(2+) as a cofactor. In terms of processing, N- and O-glycosylated.

The enzyme catalyses RH + Cl(-) + H2O2 = RCl + 2 H2O.. Catalyzes peroxidative halogenations involved in the biosynthesis of clardariomycin (2,2-dichloro-1,3-cyclo-pentenedione). The enzyme also has potent catalase activity and in the absence of halide ion, acts as a peroxidase similar to plant peroxidases. The sequence is that of Chloroperoxidase (CPO) from Leptoxyphium fumago (Caldariomyces fumago).